Reading from the N-terminus, the 109-residue chain is C-X-C motif chemokine 13 (109 aa).

The first 21 residues, 1 to 21, serve as a signal peptide directing secretion; the sequence is MRLSTATLLLLLASCLSPGHG. Intrachain disulfides connect Cys32–Cys59 and Cys34–Cys75.

Belongs to the intercrine alpha (chemokine CxC) family. Found in spleen (B-cell-rich zone or follicles), Peyer patches (strongest within germinal centers and extending to the mantle zone) and lymph nodes (in reticular pattern in follicles).

It localises to the secreted. Its function is as follows. Strongly chemotactic for B-lymphocytes, weakly for spleen monocytes and macrophages but no chemotactic activity for granulocytes. Binds to BLR1/CXCR5. May play a role in directing the migration of B-lymphocytes to follicles in secondary lymphoid organs. In Mus musculus (Mouse), this protein is C-X-C motif chemokine 13 (Cxcl13).